Here is a 664-residue protein sequence, read N- to C-terminus: Methionine--tRNA ligase (664 aa).

A 'HIGH' region motif is present at residues 13 to 23 (PYTNGPCHLGH). 4 residues coordinate Zn(2+): C144, C147, C156, and C160. The short motif at 327–331 (KFSKS) is the 'KMSKS' region element. Residue K330 coordinates ATP. A tRNA-binding domain is found at 566–664 (EFAKVEMKTG…TPVPSGTKIR (99 aa)).

The protein belongs to the class-I aminoacyl-tRNA synthetase family. MetG type 1 subfamily. As to quaternary structure, homodimer. It depends on Zn(2+) as a cofactor.

Its subcellular location is the cytoplasm. It carries out the reaction tRNA(Met) + L-methionine + ATP = L-methionyl-tRNA(Met) + AMP + diphosphate. Is required not only for elongation of protein synthesis but also for the initiation of all mRNA translation through initiator tRNA(fMet) aminoacylation. The protein is Methionine--tRNA ligase of Methanospirillum hungatei JF-1 (strain ATCC 27890 / DSM 864 / NBRC 100397 / JF-1).